Consider the following 405-residue polypeptide: S-adenosylmethionine synthase (405 aa).

H19 contributes to the ATP binding site. D21 contributes to the Mg(2+) binding site. E47 contacts K(+). L-methionine-binding residues include E60 and Q103. The segment at 103–113 (QSADIAQGVDK) is flexible loop. Residues 179 to 181 (DGK), 246 to 247 (RF), D255, 261 to 262 (RK), A278, and K282 each bind ATP. D255 lines the L-methionine pocket. K286 serves as a coordination point for L-methionine.

The protein belongs to the AdoMet synthase family. Homotetramer; dimer of dimers. Requires Mg(2+) as cofactor. K(+) serves as cofactor.

The protein resides in the cytoplasm. It carries out the reaction L-methionine + ATP + H2O = S-adenosyl-L-methionine + phosphate + diphosphate. The protein operates within amino-acid biosynthesis; S-adenosyl-L-methionine biosynthesis; S-adenosyl-L-methionine from L-methionine: step 1/1. Catalyzes the formation of S-adenosylmethionine (AdoMet) from methionine and ATP. The overall synthetic reaction is composed of two sequential steps, AdoMet formation and the subsequent tripolyphosphate hydrolysis which occurs prior to release of AdoMet from the enzyme. The sequence is that of S-adenosylmethionine synthase from Shouchella clausii (strain KSM-K16) (Alkalihalobacillus clausii).